The chain runs to 585 residues: Protein NRT1/ PTR FAMILY 8.3 (585 aa).

Residue Gly2 is modified to N-acetylglycine. Residues 91–111 traverse the membrane as a helical segment; the sequence is WQGTCYLTPLIGAVLADAYWG. Phosphothreonine is present on Thr115. The next 10 membrane-spanning stretches (helical) occupy residues 116–136, 154–174, 200–220, 228–248, 351–371, 387–407, 431–451, 472–492, 511–531, and 556–576; these read IACFSGIYFIGMSALTLSASV, PAQYAMFFGGLYLIALGTGGI, FFNWFYFSINIGALVSSSLLV, WGLGFGIPTVFMGLAIASFFF, FPIWASGIIFSAVYAQMSTMF, LPPAALGTFDTASVIIWVPLY, MGIGLFVSVLCMAAAAIVEII, VLWQIPQYFILGAAEVFYFIG, ALALLTNALGNYLSSLILTLV, and FFWLLAGLSLVNMAVYFFSAA.

The protein belongs to the major facilitator superfamily. Proton-dependent oligopeptide transporter (POT/PTR) (TC 2.A.17) family. As to expression, highly expressed in young leaves, roots and germinating seeds, intermediately in stems, flowers and mature leaves and at low level in siliques.

Its subcellular location is the vacuole membrane. Its activity is regulated as follows. Inhibited by leucyl-ethionine. Its function is as follows. Peptide transporter. Mediates the transport of di- and tripeptides. High affinity, low capacity transporter. Can also transport histidine. The chain is Protein NRT1/ PTR FAMILY 8.3 (NPF8.3) from Arabidopsis thaliana (Mouse-ear cress).